The primary structure comprises 164 residues: S-ribosylhomocysteine lyase (164 aa).

His54, His58, and Cys128 together coordinate Fe cation.

It belongs to the LuxS family. Homodimer. Fe cation is required as a cofactor.

It catalyses the reaction S-(5-deoxy-D-ribos-5-yl)-L-homocysteine = (S)-4,5-dihydroxypentane-2,3-dione + L-homocysteine. In terms of biological role, involved in the synthesis of autoinducer 2 (AI-2) which is secreted by bacteria and is used to communicate both the cell density and the metabolic potential of the environment. The regulation of gene expression in response to changes in cell density is called quorum sensing. Catalyzes the transformation of S-ribosylhomocysteine (RHC) to homocysteine (HC) and 4,5-dihydroxy-2,3-pentadione (DPD). The sequence is that of S-ribosylhomocysteine lyase from Campylobacter jejuni subsp. jejuni serotype O:23/36 (strain 81-176).